Here is a 113-residue protein sequence, read N- to C-terminus: Hydrogenase maturation factor HypA (113 aa).

Ni(2+) is bound at residue histidine 2. Residues cysteine 73, cysteine 76, cysteine 89, and cysteine 92 each contribute to the Zn(2+) site.

The protein belongs to the HypA/HybF family.

Involved in the maturation of [NiFe] hydrogenases. Required for nickel insertion into the metal center of the hydrogenase. The sequence is that of Hydrogenase maturation factor HypA from Dechloromonas aromatica (strain RCB).